The sequence spans 130 residues: uncharacterized protein (130 aa).

The region spanning 19–73 (IYSLRLAKGLSRQQLAEVIDVTHQQLQKYEKAINRISVGRLVLIAEALDRNIDYF) is the HTH cro/C1-type domain. A DNA-binding region (H-T-H motif) is located at residues 30–49 (RQQLAEVIDVTHQQLQKYEK).

This is an uncharacterized protein from Rickettsia prowazekii (strain Madrid E).